The primary structure comprises 189 residues: Calcium and integrin-binding family member 2 (189 aa).

3 consecutive EF-hand domains span residues 68–103 (RENP…FSEQ), 105–140 (PRDI…MTKN), and 146–181 (EHQQ…APDF). Residues Asp-118, Asp-120, Asp-122, Asp-129, Asp-159, Asp-161, Asp-163, Lys-165, and Glu-170 each coordinate Ca(2+).

In terms of assembly, monomer. Homodimer.

It is found in the cytoplasm. Functionally, calcium- and integrin-binding protein. Plays a role in intracellular calcium homeostasis. Critical for proper photoreceptor cell maintenance and function. Required for prevention of light-dependent retinal degeneration. In Drosophila melanogaster (Fruit fly), this protein is Calcium and integrin-binding family member 2.